We begin with the raw amino-acid sequence, 387 residues long: WD repeat-containing protein 89 (387 aa).

6 WD repeats span residues 21–65 (KEPT…VLRE), 68–107 (GYPG…EKPV), 112–156 (GYPS…QDLS), 168–208 (THSD…EEDA), 214–254 (NSIS…TDEP), and 319–358 (GHAA…KTFT).

This chain is WD repeat-containing protein 89 (WDR89), found in Pongo abelii (Sumatran orangutan).